Reading from the N-terminus, the 326-residue chain is Ras association domain-containing protein 2 (326 aa).

Residues 176-264 enclose the Ras-associating domain; that stretch reads YNHKTSVFTP…SKVFLMEKDQ (89 aa). An SARAH domain is found at 272–319; it reads VAQYIKFEMPVLKSFIQKLQEEEDREVEKLMQKYTVLRLMIRQRLEEI.

Interacts directly with activated KRAS in a GTP-dependent manner. Interacts (via SARAH domain) with STK3/MST2 and STK4/MST1. Post-translationally, phosphorylated by STK3/MST2 and STK4/MST1.

The protein resides in the nucleus. The protein localises to the cytoplasm. It localises to the chromosome. Its subcellular location is the centromere. It is found in the kinetochore. Potential tumor suppressor. Acts as a KRAS-specific effector protein. May promote apoptosis and cell cycle arrest. Stabilizes STK3/MST2 by protecting it from proteasomal degradation. This Rattus norvegicus (Rat) protein is Ras association domain-containing protein 2 (Rassf2).